Consider the following 504-residue polypeptide: Acid phosphatase A (504 aa).

Positions 1–22 (MYTLLDILKGLPLLAVAAIASA) are cleaved as a signal peptide. Asn84, Asn112, Asn168, Asn260, Asn415, Asn450, and Asn474 each carry an N-linked (GlcNAc...) asparagine glycan.

The protein belongs to the metallophosphoesterase superfamily. Purple acid phosphatase family. Monomer.

The protein localises to the secreted. The enzyme catalyses a phosphate monoester + H2O = an alcohol + phosphate. In terms of biological role, acid phosphatase involved in the regulation of fungal phenotypic traits and virulence in C.parasitica. The protein is Acid phosphatase A of Cryphonectria parasitica (strain ATCC 38755 / EP155).